We begin with the raw amino-acid sequence, 292 residues long: 2-(5''-triphosphoribosyl)-3'-dephosphocoenzyme-A synthase (292 aa).

This sequence belongs to the CitG/MdcB family.

The enzyme catalyses 3'-dephospho-CoA + ATP = 2'-(5''-triphospho-alpha-D-ribosyl)-3'-dephospho-CoA + adenine. Catalyzes the formation of 2-(5''-triphosphoribosyl)-3'-dephosphocoenzyme-A, the precursor of the prosthetic group of the holo-acyl carrier protein (gamma chain) of citrate lyase, from ATP and dephospho-CoA. This Escherichia coli (strain SMS-3-5 / SECEC) protein is 2-(5''-triphosphoribosyl)-3'-dephosphocoenzyme-A synthase.